Here is a 109-residue protein sequence, read N- to C-terminus: Co-chaperonin GroES (109 aa).

This sequence belongs to the GroES chaperonin family. In terms of assembly, heptamer of 7 subunits arranged in a ring. Interacts with the chaperonin GroEL.

It localises to the cytoplasm. Its function is as follows. Together with the chaperonin GroEL, plays an essential role in assisting protein folding. The GroEL-GroES system forms a nano-cage that allows encapsulation of the non-native substrate proteins and provides a physical environment optimized to promote and accelerate protein folding. GroES binds to the apical surface of the GroEL ring, thereby capping the opening of the GroEL channel. The chain is Co-chaperonin GroES from Methanosarcina acetivorans (strain ATCC 35395 / DSM 2834 / JCM 12185 / C2A).